The primary structure comprises 342 residues: Ferrochelatase (342 aa).

2 residues coordinate Fe cation: His188 and Glu268.

Belongs to the ferrochelatase family.

It is found in the cytoplasm. The catalysed reaction is heme b + 2 H(+) = protoporphyrin IX + Fe(2+). It functions in the pathway porphyrin-containing compound metabolism; protoheme biosynthesis; protoheme from protoporphyrin-IX: step 1/1. Its function is as follows. Catalyzes the ferrous insertion into protoporphyrin IX. The sequence is that of Ferrochelatase from Rickettsia conorii (strain ATCC VR-613 / Malish 7).